Here is a 131-residue protein sequence, read N- to C-terminus: Small ribosomal subunit protein uS11 (131 aa).

Belongs to the universal ribosomal protein uS11 family. Part of the 30S ribosomal subunit. Interacts with proteins S7 and S18. Binds to IF-3.

Located on the platform of the 30S subunit, it bridges several disparate RNA helices of the 16S rRNA. Forms part of the Shine-Dalgarno cleft in the 70S ribosome. The protein is Small ribosomal subunit protein uS11 of Wigglesworthia glossinidia brevipalpis.